The chain runs to 366 residues: Aminomethyltransferase (366 aa).

This sequence belongs to the GcvT family. As to quaternary structure, the glycine cleavage system is composed of four proteins: P, T, L and H.

It carries out the reaction N(6)-[(R)-S(8)-aminomethyldihydrolipoyl]-L-lysyl-[protein] + (6S)-5,6,7,8-tetrahydrofolate = N(6)-[(R)-dihydrolipoyl]-L-lysyl-[protein] + (6R)-5,10-methylene-5,6,7,8-tetrahydrofolate + NH4(+). The glycine cleavage system catalyzes the degradation of glycine. This Bacillus cereus (strain 03BB102) protein is Aminomethyltransferase.